We begin with the raw amino-acid sequence, 429 residues long: Homocysteine synthase (429 aa).

Lys-210 carries the N6-(pyridoxal phosphate)lysine modification.

The protein belongs to the trans-sulfuration enzymes family. As to quaternary structure, homotetramer. Requires pyridoxal 5'-phosphate as cofactor.

It is found in the cytoplasm. The protein resides in the nucleus. The enzyme catalyses O-acetyl-L-homoserine + methanethiol = L-methionine + acetate + H(+). The catalysed reaction is O-acetyl-L-homoserine + hydrogen sulfide = L-homocysteine + acetate. Its pathway is amino-acid biosynthesis; L-methionine biosynthesis via de novo pathway; L-homocysteine from O-acetyl-L-homoserine. Its function is as follows. Catalyzes the conversion of O-acetyl-L-homoserine (OAH) into homocysteine in the methionine biosynthesis pathway. Can also use O-succinyl-L-homoserine and L-homoserine as substrates. Also has cysteine synthase (O-acetylserine sulfhydrylase) activity in vitro, but in S.pombe, it seems only to be involved in the alternative pathway of methionine biosynthesis under cysteine deficiency conditions. This Schizosaccharomyces pombe (strain 972 / ATCC 24843) (Fission yeast) protein is Homocysteine synthase.